Reading from the N-terminus, the 458-residue chain is UDP-N-acetylmuramoylalanine--D-glutamate ligase (458 aa).

Residue 124–130 participates in ATP binding; sequence GSDGKTT.

It belongs to the MurCDEF family.

The protein resides in the cytoplasm. It catalyses the reaction UDP-N-acetyl-alpha-D-muramoyl-L-alanine + D-glutamate + ATP = UDP-N-acetyl-alpha-D-muramoyl-L-alanyl-D-glutamate + ADP + phosphate + H(+). The protein operates within cell wall biogenesis; peptidoglycan biosynthesis. Cell wall formation. Catalyzes the addition of glutamate to the nucleotide precursor UDP-N-acetylmuramoyl-L-alanine (UMA). This Clostridium botulinum (strain 657 / Type Ba4) protein is UDP-N-acetylmuramoylalanine--D-glutamate ligase.